The following is a 415-amino-acid chain: Serine hydroxymethyltransferase (415 aa).

Residues Leu-121 and 125-127 (GHL) contribute to the (6S)-5,6,7,8-tetrahydrofolate site. Position 230 is an N6-(pyridoxal phosphate)lysine (Lys-230). Residue 355 to 357 (SPF) participates in (6S)-5,6,7,8-tetrahydrofolate binding.

The protein belongs to the SHMT family. In terms of assembly, homodimer. It depends on pyridoxal 5'-phosphate as a cofactor.

It is found in the cytoplasm. The enzyme catalyses (6R)-5,10-methylene-5,6,7,8-tetrahydrofolate + glycine + H2O = (6S)-5,6,7,8-tetrahydrofolate + L-serine. It participates in one-carbon metabolism; tetrahydrofolate interconversion. It functions in the pathway amino-acid biosynthesis; glycine biosynthesis; glycine from L-serine: step 1/1. Functionally, catalyzes the reversible interconversion of serine and glycine with tetrahydrofolate (THF) serving as the one-carbon carrier. This reaction serves as the major source of one-carbon groups required for the biosynthesis of purines, thymidylate, methionine, and other important biomolecules. Also exhibits THF-independent aldolase activity toward beta-hydroxyamino acids, producing glycine and aldehydes, via a retro-aldol mechanism. This is Serine hydroxymethyltransferase from Lactococcus lactis subsp. cremoris (strain MG1363).